Reading from the N-terminus, the 49-residue chain is uncharacterized protein (49 aa).

This is an uncharacterized protein from Archaeoglobus fulgidus (strain ATCC 49558 / DSM 4304 / JCM 9628 / NBRC 100126 / VC-16).